The sequence spans 130 residues: Small ribosomal subunit protein uS9 (130 aa).

Residues 109–130 form a disordered region; that stretch reads RMKERKKYGLKGARRAPQFSKR. Basic residues predominate over residues 111-130; it reads KERKKYGLKGARRAPQFSKR.

Belongs to the universal ribosomal protein uS9 family.

This chain is Small ribosomal subunit protein uS9, found in Alkaliphilus metalliredigens (strain QYMF).